We begin with the raw amino-acid sequence, 230 residues long: Urease accessory protein UreF (230 aa).

Belongs to the UreF family. As to quaternary structure, ureD, UreF and UreG form a complex that acts as a GTP-hydrolysis-dependent molecular chaperone, activating the urease apoprotein by helping to assemble the nickel containing metallocenter of UreC. The UreE protein probably delivers the nickel.

It localises to the cytoplasm. Its function is as follows. Required for maturation of urease via the functional incorporation of the urease nickel metallocenter. In Polynucleobacter asymbioticus (strain DSM 18221 / CIP 109841 / QLW-P1DMWA-1) (Polynucleobacter necessarius subsp. asymbioticus), this protein is Urease accessory protein UreF.